The sequence spans 291 residues: Protein US2 (291 aa).

G2 carries the N-acetylglycine; by host; partial modification. Positions 251 to 270 are disordered; that stretch reads PEVPDEQPTSPGRGPQETDP.

The protein belongs to the herpesviridae HHV-1 US2 protein family. In terms of assembly, interacts with host KRT18.

It is found in the host cytoplasm. It localises to the host nucleus. The chain is Protein US2 from Homo sapiens (Human).